We begin with the raw amino-acid sequence, 192 residues long: Orotate phosphoribosyltransferase (192 aa).

Residues arginine 84, lysine 88, and 110–118 (DDVLTTGNS) contribute to the 5-phospho-alpha-D-ribose 1-diphosphate site. Positions 114 and 142 each coordinate orotate.

Belongs to the purine/pyrimidine phosphoribosyltransferase family. PyrE subfamily. As to quaternary structure, homodimer. Mg(2+) serves as cofactor.

It carries out the reaction orotidine 5'-phosphate + diphosphate = orotate + 5-phospho-alpha-D-ribose 1-diphosphate. It participates in pyrimidine metabolism; UMP biosynthesis via de novo pathway; UMP from orotate: step 1/2. In terms of biological role, catalyzes the transfer of a ribosyl phosphate group from 5-phosphoribose 1-diphosphate to orotate, leading to the formation of orotidine monophosphate (OMP). This is Orotate phosphoribosyltransferase from Pyrobaculum calidifontis (strain DSM 21063 / JCM 11548 / VA1).